The sequence spans 144 residues: 3-dehydroquinate dehydratase (144 aa).

The active-site Proton acceptor is Tyr-22. Substrate-binding residues include Asn-73, His-79, and Asp-86. The Proton donor role is filled by His-99. Residues 100-101 (LS) and Arg-110 each bind substrate.

This sequence belongs to the type-II 3-dehydroquinase family. In terms of assembly, homododecamer.

It carries out the reaction 3-dehydroquinate = 3-dehydroshikimate + H2O. Its pathway is metabolic intermediate biosynthesis; chorismate biosynthesis; chorismate from D-erythrose 4-phosphate and phosphoenolpyruvate: step 3/7. Its function is as follows. Catalyzes a trans-dehydration via an enolate intermediate. This is 3-dehydroquinate dehydratase from Pelotomaculum thermopropionicum (strain DSM 13744 / JCM 10971 / SI).